Consider the following 254-residue polypeptide: Proline-rich protein 23A3 (254 aa).

3 disordered regions span residues 1–50, 161–196, and 212–254; these read MLRT…LEAP, ASPP…GAEQ, and PFPG…LVYE. The segment covering 35-50 has biased composition (low complexity); it reads EPACPEPLAQPELEAP. Pro residues predominate over residues 214–241; sequence PGSPLQPLPPSPSRNPQEQLPPCPPCSP. The span at 243–254 shows a compositional bias: basic residues; the sequence is APRRARKRLVYE.

It belongs to the PRR23 family.

The polypeptide is Proline-rich protein 23A3 (Mus musculus (Mouse)).